We begin with the raw amino-acid sequence, 609 residues long: Major facilitator superfamily domain-containing protein 6-like protein A (609 aa).

Helical transmembrane passes span 41–61 (LGLGAPLVGIIFGFKHAVHLL) and 78–98 (FFIMTSLLLSAGVGSLFAYYP). The tract at residues 201 to 241 (SGKAQKVMSSKSAASNSKQRSSLNNHTSPYATHPNVSHHPS) is disordered. Over residues 207–230 (VMSSKSAASNSKQRSSLNNHTSPY) the composition is skewed to polar residues. 9 consecutive transmembrane segments (helical) span residues 265–285 (IFLIVLVLVIIWEILAAPLEW), 307–327 (LWIWGYLGASMGSIFITFLVD), 340–360 (VFFHFFCYGGFLIGTLFLSTL), 388–408 (IVLTALTVFLLGAVGSTTQNF), 420–440 (ELYMGLSIAVGLLSELTLYFF), 452–472 (WMVALGLFSLGVQCLYYSFLW), 475–495 (WSVLAIQILNAFSSGVIWWAI), 513–535 (LALRWLAYGCGSSTGSFASGFII), and 541–561 (AVLYQACCITLLLWIIIFLLV).

It belongs to the major facilitator superfamily. MFSD6 family.

It localises to the membrane. The protein is Major facilitator superfamily domain-containing protein 6-like protein A (mfsd6l-a) of Xenopus laevis (African clawed frog).